The chain runs to 118 residues: UPF0344 protein YisL (118 aa).

Transmembrane regions (helical) follow at residues 4–24 (LHIT…SLYS), 33–53 (ITHM…AELF), 62–82 (EYAG…MLLI), and 93–113 (LWVG…HLPI).

It belongs to the UPF0344 family.

It is found in the cell membrane. The sequence is that of UPF0344 protein YisL (yisL) from Bacillus subtilis (strain 168).